The sequence spans 209 residues: COP9 signalosome complex subunit 8 (209 aa).

The PCI domain maps to 8–179 (DNAFSFRKLL…GTLDVSLNRF (172 aa)). Ser-175 is modified (phosphoserine).

Belongs to the CSN8 family. As to quaternary structure, component of the CSN complex, composed of COPS1/GPS1, COPS2, COPS3, COPS4, COPS5, COPS6, COPS7 (COPS7A or COPS7B), COPS8 and COPS9. In the complex, it probably interacts directly with COPS3, COPS4 and COPS7 (COPS7A or COPS7B). In terms of tissue distribution, widely expressed.

It is found in the cytoplasm. The protein resides in the nucleus. In terms of biological role, component of the COP9 signalosome complex (CSN), a complex involved in various cellular and developmental processes. The CSN complex is an essential regulator of the ubiquitin (Ubl) conjugation pathway by mediating the deneddylation of the cullin subunits of SCF-type E3 ligase complexes, leading to decrease the Ubl ligase activity of SCF-type complexes such as SCF, CSA or DDB2. The complex is also involved in phosphorylation of p53/TP53, c-jun/JUN, IkappaBalpha/NFKBIA, ITPK1 and IRF8/ICSBP, possibly via its association with CK2 and PKD kinases. CSN-dependent phosphorylation of TP53 and JUN promotes and protects degradation by the Ubl system, respectively. This Mus musculus (Mouse) protein is COP9 signalosome complex subunit 8 (Cops8).